The chain runs to 174 residues: Transcriptional repressor NrdR (174 aa).

The segment at 3–34 is a zinc-finger region; sequence CPICHFPETDVIDTRKLYEGEVIRRRRKCRAC. In terms of domain architecture, ATP-cone spans 49–139; that stretch reads LMVVKKDGTR…VYRSFADIGK (91 aa). Positions 151–174 are disordered; the sequence is EGTRNGHSSAATTDQGTTDNHSRM. Positions 155–174 are enriched in polar residues; it reads NGHSSAATTDQGTTDNHSRM.

This sequence belongs to the NrdR family. Zn(2+) serves as cofactor.

In terms of biological role, negatively regulates transcription of bacterial ribonucleotide reductase nrd genes and operons by binding to NrdR-boxes. This is Transcriptional repressor NrdR from Chloroflexus aggregans (strain MD-66 / DSM 9485).